Reading from the N-terminus, the 304-residue chain is 5-hmdU DNA kinase 2 (304 aa).

The tract at residues 260–304 is disordered; it reads VGGQDPLAHRVPEKPQKASKTKNKAVAKEEPKTSSVSLLGLMRKA. Over residues 266–275 the composition is skewed to basic and acidic residues; it reads LAHRVPEKPQ.

This sequence belongs to the thymidylate kinase family. 5-hmdU DNA kinase subfamily.

It carries out the reaction 5-hydroxymethyl-dUMP in DNA + ATP = 5-phosphomethyl-dUMP in DNA + ADP + H(+). In terms of biological role, phosphorylates 5-hydroxymethyluracil (5hmdU) into 5-phosphomethyl-2'-deoxyuridine (5- PmdU) on DNA as a step in the pathway leading to thymidine hypermodifications in the viral genome. The phosphate is added internally to the DNA polymer. As a final result of the pathway of hypermodification, 5-aminoethoxy-2'-deoxymethyluridine (5-NeOmdU) substitutes for about 40% of the thymidines in the viral DNA. These modifications probably prevent degradation of viral genome by the host restriction-modification antiviral defense system. The sequence is that of 5-hmdU DNA kinase 2 from Salmonella typhi.